Reading from the N-terminus, the 159-residue chain is Regulatory protein RecX (159 aa).

Belongs to the RecX family.

Its subcellular location is the cytoplasm. Its function is as follows. Modulates RecA activity. This is Regulatory protein RecX from Chlorobium limicola (strain DSM 245 / NBRC 103803 / 6330).